Consider the following 44-residue polypeptide: Photosystem I reaction center subunit IX (44 aa).

Residues 7–27 (YLSTAPVLATLWFGSLAGLLI) traverse the membrane as a helical segment.

Belongs to the PsaJ family.

It is found in the plastid. The protein localises to the chloroplast thylakoid membrane. May help in the organization of the PsaE and PsaF subunits. The protein is Photosystem I reaction center subunit IX of Cycas taitungensis (Prince sago).